The following is a 224-amino-acid chain: PKHD-type hydroxylase CYB_2270 (224 aa).

The Fe2OG dioxygenase domain maps to 78 to 176; the sequence is LIHSILISCY…RYAAVSWVQS (99 aa). 3 residues coordinate Fe cation: His-96, Asp-98, and His-157. Arg-167 is a binding site for 2-oxoglutarate.

Fe(2+) is required as a cofactor. Requires L-ascorbate as cofactor.

The sequence is that of PKHD-type hydroxylase CYB_2270 from Synechococcus sp. (strain JA-2-3B'a(2-13)) (Cyanobacteria bacterium Yellowstone B-Prime).